A 1080-amino-acid polypeptide reads, in one-letter code: DNA-directed RNA polymerase subunit beta C-terminal section (1080 aa).

The protein belongs to the RNA polymerase beta chain family. In plastids the minimal PEP RNA polymerase catalytic core is composed of four subunits: alpha, beta, beta', and beta''. When a (nuclear-encoded) sigma factor is associated with the core the holoenzyme is formed, which can initiate transcription.

It is found in the plastid. Its subcellular location is the chloroplast. It carries out the reaction RNA(n) + a ribonucleoside 5'-triphosphate = RNA(n+1) + diphosphate. DNA-dependent RNA polymerase catalyzes the transcription of DNA into RNA using the four ribonucleoside triphosphates as substrates. The protein is DNA-directed RNA polymerase subunit beta C-terminal section (rpoB2) of Stigeoclonium helveticum (Green alga).